Consider the following 119-residue polypeptide: Large ribosomal subunit protein bL20 (119 aa).

This sequence belongs to the bacterial ribosomal protein bL20 family.

Functionally, binds directly to 23S ribosomal RNA and is necessary for the in vitro assembly process of the 50S ribosomal subunit. It is not involved in the protein synthesizing functions of that subunit. The protein is Large ribosomal subunit protein bL20 of Streptococcus mutans serotype c (strain ATCC 700610 / UA159).